A 532-amino-acid chain; its full sequence is Muscarinic acetylcholine receptor M5 (532 aa).

The Extracellular portion of the chain corresponds to 1–29 (MEGDSYGNATTINGTPVNHQPLERHRLWE). A glycan (N-linked (GlcNAc...) asparagine) is linked at Asn8. A helical membrane pass occupies residues 30-53 (VITIAAVTAVVSLITIVGNVLVMI). Topologically, residues 54-66 (SFKVNSQLKTVNN) are cytoplasmic. Residues 67–87 (YYLLSLACADLIIGIFSMNLY) form a helical membrane-spanning segment. The Extracellular portion of the chain corresponds to 88 to 104 (TTYILMGRWALGSLACD). A helical transmembrane segment spans residues 105-126 (LWLALDYVASNASVMNLLVISF). Topologically, residues 127 to 146 (DRYFSITRPLTYRAKRTPKR) are cytoplasmic. The chain crosses the membrane as a helical span at residues 147–169 (AGIMIGLAWLISFILWAPAILCW). At 170 to 191 (QYLVGKRTVPPDECQIQFLSEP) the chain is on the extracellular side. A helical transmembrane segment spans residues 192–214 (TITFGTAIAAFYIPVSVMTILYC). At 215–443 (RIYRETEKRT…LVKERKAAQT (229 aa)) the chain is on the cytoplasmic side. The disordered stretch occupies residues 263–294 (QRERNQASRSSSHRSTSITGKPSQATGPSTNW). The segment covering 270 to 279 (SRSSSHRSTS) has biased composition (low complexity). Positions 280-294 (ITGKPSQATGPSTNW) are enriched in polar residues. A helical membrane pass occupies residues 444–464 (LSAILLAFIITWTPYNIMVLV). Residues 465-478 (STFCDKCVPVALWH) are Extracellular-facing. Residues 479–498 (LGYWLCYVNSTVNPICYALC) form a helical membrane-spanning segment. Topologically, residues 499–532 (NRTFRKTFKMLLLCQWKKKKVEEKLYWQGNSKLP) are cytoplasmic. 2 positions are modified to phosphothreonine: Thr501 and Thr505.

Belongs to the G-protein coupled receptor 1 family. Muscarinic acetylcholine receptor subfamily. CHRM5 sub-subfamily.

The protein resides in the cell membrane. Its subcellular location is the postsynaptic cell membrane. Its function is as follows. The muscarinic acetylcholine receptor mediates various cellular responses, including inhibition of adenylate cyclase, breakdown of phosphoinositides and modulation of potassium channels through the action of G proteins. Primary transducing effect is Pi turnover. The polypeptide is Muscarinic acetylcholine receptor M5 (CHRM5) (Saimiri boliviensis boliviensis (Bolivian squirrel monkey)).